The following is a 376-amino-acid chain: Beta-centractin (376 aa).

Met-1 carries the N-acetylmethionine modification. At Tyr-4 the chain carries 3'-nitrotyrosine.

It belongs to the actin family. ARP1 subfamily.

The protein localises to the cytoplasm. It localises to the cytoskeleton. Its subcellular location is the microtubule organizing center. It is found in the centrosome. Its function is as follows. Component of a multi-subunit complex involved in microtubule based vesicle motility. It is associated with the centrosome. This is Beta-centractin (ACTR1B) from Bos taurus (Bovine).